A 202-amino-acid polypeptide reads, in one-letter code: Superoxide dismutase [Cu-Zn], chloroplastic (202 aa).

A chloroplast-targeting transit peptide spans 1-48; that stretch reads MASQTLVSPSPLSSHSLLRTSFSGVSVKLAPQFSTLATSNFKPLTVVA. Cu cation contacts are provided by H94, H96, and H111. C105 and C194 are disulfide-bonded. Zn(2+) is bound by residues H111, H119, H128, and D131. H168 provides a ligand contact to Cu cation.

The protein belongs to the Cu-Zn superoxide dismutase family. As to quaternary structure, homotetramer. It depends on Cu cation as a cofactor. Zn(2+) is required as a cofactor.

It is found in the plastid. The protein localises to the chloroplast. It catalyses the reaction 2 superoxide + 2 H(+) = H2O2 + O2. Functionally, destroys radicals which are normally produced within the cells and which are toxic to biological systems. This Pisum sativum (Garden pea) protein is Superoxide dismutase [Cu-Zn], chloroplastic (SODCP).